Here is a 518-residue protein sequence, read N- to C-terminus: GMP synthase [glutamine-hydrolyzing] (518 aa).

The region spanning R6 to D200 is the Glutamine amidotransferase type-1 domain. C84 acts as the Nucleophile in catalysis. Active-site residues include H175 and E177. A GMPS ATP-PPase domain is found at W201–R393. Position 228–234 (S228–S234) interacts with ATP.

As to quaternary structure, homodimer.

It catalyses the reaction XMP + L-glutamine + ATP + H2O = GMP + L-glutamate + AMP + diphosphate + 2 H(+). It participates in purine metabolism; GMP biosynthesis; GMP from XMP (L-Gln route): step 1/1. Its function is as follows. Catalyzes the synthesis of GMP from XMP. The polypeptide is GMP synthase [glutamine-hydrolyzing] (Cereibacter sphaeroides (strain ATCC 17025 / ATH 2.4.3) (Rhodobacter sphaeroides)).